The chain runs to 1185 residues: Ovostatin homolog 1 (1185 aa).

Residues 1 to 21 (MHVHVCVCLCVCIYTSSCVCA) form the signal peptide. N-linked (GlcNAc...) asparagine glycans are attached at residues Asn80, Asn155, Asn347, Asn452, and Asn725.

This sequence belongs to the protease inhibitor I39 (alpha-2-macroglobulin) family. Homotetramer.

The protein localises to the secreted. In terms of biological role, is able to inhibit all four classes of proteinases by a unique 'trapping' mechanism. In Homo sapiens (Human), this protein is Ovostatin homolog 1 (OVOS1).